The sequence spans 465 residues: RuvB-like helicase 2 (465 aa).

72 to 79 contacts ATP; it reads GPPSTGKT.

Belongs to the RuvB family. As to quaternary structure, may form heterododecamers with RVB1. Component of the SWR1 chromatin remodeling complex, the INO80 chromatin remodeling complex, and of the R2TP complex. Interacts with dil1.

The protein localises to the nucleus. It carries out the reaction ATP + H2O = ADP + phosphate + H(+). Its function is as follows. DNA helicase which participates in several chromatin remodeling complexes, including the SWR1 and the INO80 complexes. The SWR1 complex mediates the ATP-dependent exchange of histone H2A for the H2A variant HZT1 leading to transcriptional regulation of selected genes by chromatin remodeling. The INO80 complex remodels chromatin by shifting nucleosomes and is involved in DNA repair. Also involved in pre-rRNA processing. The protein is RuvB-like helicase 2 (rvb2) of Schizosaccharomyces pombe (strain 972 / ATCC 24843) (Fission yeast).